The primary structure comprises 50 residues: Cytochrome c oxidase subunit 4 (50 aa).

Over 2–17 (ASHHEITDHKHGEMDI) the chain is Cytoplasmic. A helical membrane pass occupies residues 18–49 (RHQQATFAGFIKGATWVSILSIAVLVFLALAN). Position 50 (Ser50) is a topological domain, periplasmic.

Its subcellular location is the cell inner membrane. It catalyses the reaction 4 Fe(II)-[cytochrome c] + O2 + 8 H(+)(in) = 4 Fe(III)-[cytochrome c] + 2 H2O + 4 H(+)(out). In terms of biological role, not required for enzymatic activity or proton pumping of the cytochrome c oxidase complex. This Paracoccus denitrificans protein is Cytochrome c oxidase subunit 4 (ctaH).